The primary structure comprises 147 residues: Cytochrome c-type biogenesis protein CcmE (147 aa).

Residues 1–7 (MKPRHKR) are Cytoplasmic-facing. Residues 8 to 28 (AAIIAGGLAALGIAAYLVLNA) traverse the membrane as a helical; Signal-anchor for type II membrane protein segment. Residues 29 to 147 (FQSNLVFFFS…QIQKTIKSLK (119 aa)) lie on the Periplasmic side of the membrane. Positions 121 and 125 each coordinate heme.

Belongs to the CcmE/CycJ family.

It is found in the cell inner membrane. In terms of biological role, heme chaperone required for the biogenesis of c-type cytochromes. Transiently binds heme delivered by CcmC and transfers the heme to apo-cytochromes in a process facilitated by CcmF and CcmH. This chain is Cytochrome c-type biogenesis protein CcmE, found in Albidiferax ferrireducens (strain ATCC BAA-621 / DSM 15236 / T118) (Rhodoferax ferrireducens).